The following is a 59-amino-acid chain: Single-pass membrane and coiled-coil domain-containing protein 4 (59 aa).

Residues 1-23 (MRQLKGKPKKETSKDKKERKQAM) form a disordered region. Residues 9-22 (KKETSKDKKERKQA) are compositionally biased toward basic and acidic residues. Residues 9–31 (KKETSKDKKERKQAMQEARQQIT) are a coiled coil. A helical membrane pass occupies residues 32 to 52 (TVVLPTLAVVVLLIVVFVYVA).

It belongs to the SMCO4 family.

The protein resides in the membrane. The sequence is that of Single-pass membrane and coiled-coil domain-containing protein 4 (SMCO4) from Homo sapiens (Human).